The chain runs to 256 residues: C-8 sterol isomerase (256 aa).

Positions methionine 1 to arginine 31 are disordered. Over residues serine 7 to cysteine 30 the composition is skewed to low complexity. A helical transmembrane segment spans residues isoleucine 40–valine 60.

It belongs to the ERG2 family.

The protein resides in the endoplasmic reticulum membrane. It participates in steroid metabolism; ergosterol biosynthesis; ergosterol from zymosterol: step 2/5. Catalyzes the reaction which results in unsaturation at C-7 in the B ring of sterols. The protein is C-8 sterol isomerase (erg-1) of Neurospora crassa (strain ATCC 24698 / 74-OR23-1A / CBS 708.71 / DSM 1257 / FGSC 987).